Consider the following 330-residue polypeptide: tRNA U34 carboxymethyltransferase (330 aa).

Carboxy-S-adenosyl-L-methionine is bound by residues K91, W105, K110, G130, 152 to 154 (DPS), 181 to 182 (IE), M196, Y200, and R315.

This sequence belongs to the class I-like SAM-binding methyltransferase superfamily. CmoB family. As to quaternary structure, homotetramer.

The catalysed reaction is carboxy-S-adenosyl-L-methionine + 5-hydroxyuridine(34) in tRNA = 5-carboxymethoxyuridine(34) in tRNA + S-adenosyl-L-homocysteine + H(+). Its function is as follows. Catalyzes carboxymethyl transfer from carboxy-S-adenosyl-L-methionine (Cx-SAM) to 5-hydroxyuridine (ho5U) to form 5-carboxymethoxyuridine (cmo5U) at position 34 in tRNAs. The chain is tRNA U34 carboxymethyltransferase from Shewanella halifaxensis (strain HAW-EB4).